A 257-amino-acid chain; its full sequence is UPF0246 protein Rsph17025_0016 (257 aa).

This sequence belongs to the UPF0246 family.

This Cereibacter sphaeroides (strain ATCC 17025 / ATH 2.4.3) (Rhodobacter sphaeroides) protein is UPF0246 protein Rsph17025_0016.